Here is a 379-residue protein sequence, read N- to C-terminus: Acetylornithine aminotransferase (379 aa).

Pyridoxal 5'-phosphate-binding positions include 93–94 (GA) and phenylalanine 120. Arginine 123 contacts N(2)-acetyl-L-ornithine. Position 205–208 (205–208 (DEVQ)) interacts with pyridoxal 5'-phosphate. Lysine 234 bears the N6-(pyridoxal phosphate)lysine mark. Serine 262 is a N(2)-acetyl-L-ornithine binding site. Threonine 263 contributes to the pyridoxal 5'-phosphate binding site.

The protein belongs to the class-III pyridoxal-phosphate-dependent aminotransferase family. ArgD subfamily. In terms of assembly, homodimer. It depends on pyridoxal 5'-phosphate as a cofactor.

It localises to the cytoplasm. The enzyme catalyses N(2)-acetyl-L-ornithine + 2-oxoglutarate = N-acetyl-L-glutamate 5-semialdehyde + L-glutamate. It functions in the pathway amino-acid biosynthesis; L-arginine biosynthesis; N(2)-acetyl-L-ornithine from L-glutamate: step 4/4. In Streptococcus mutans serotype c (strain ATCC 700610 / UA159), this protein is Acetylornithine aminotransferase.